A 440-amino-acid chain; its full sequence is ATP-dependent protease ATPase subunit HslU (440 aa).

Residues I18, 60–65, D252, E318, and R390 each bind ATP; that span reads GVGKTE.

Belongs to the ClpX chaperone family. HslU subfamily. As to quaternary structure, a double ring-shaped homohexamer of HslV is capped on each side by a ring-shaped HslU homohexamer. The assembly of the HslU/HslV complex is dependent on binding of ATP.

It is found in the cytoplasm. In terms of biological role, ATPase subunit of a proteasome-like degradation complex; this subunit has chaperone activity. The binding of ATP and its subsequent hydrolysis by HslU are essential for unfolding of protein substrates subsequently hydrolyzed by HslV. HslU recognizes the N-terminal part of its protein substrates and unfolds these before they are guided to HslV for hydrolysis. The sequence is that of ATP-dependent protease ATPase subunit HslU from Acidithiobacillus ferrooxidans (strain ATCC 23270 / DSM 14882 / CIP 104768 / NCIMB 8455) (Ferrobacillus ferrooxidans (strain ATCC 23270)).